The following is a 538-amino-acid chain: Putative cysteine ligase BshC (538 aa).

The stretch at 454 to 482 (LEKNAGFIQDQLQFLEKTVIRRIEEKENY) forms a coiled coil.

Belongs to the BshC family.

Its function is as follows. Involved in bacillithiol (BSH) biosynthesis. May catalyze the last step of the pathway, the addition of cysteine to glucosamine malate (GlcN-Mal) to generate BSH. In Bacillus licheniformis (strain ATCC 14580 / DSM 13 / JCM 2505 / CCUG 7422 / NBRC 12200 / NCIMB 9375 / NCTC 10341 / NRRL NRS-1264 / Gibson 46), this protein is Putative cysteine ligase BshC.